The sequence spans 84 residues: Cell division topological specificity factor (84 aa).

The protein belongs to the MinE family.

In terms of biological role, prevents the cell division inhibition by proteins MinC and MinD at internal division sites while permitting inhibition at polar sites. This ensures cell division at the proper site by restricting the formation of a division septum at the midpoint of the long axis of the cell. The polypeptide is Cell division topological specificity factor (Pseudomonas fluorescens (strain Pf0-1)).